Consider the following 175-residue polypeptide: uncharacterized protein (175 aa).

The Macro domain occupies 1 to 173 (MYKNIIKLIS…VYKEKYKKLL (173 aa)).

It belongs to the MacroD-type family.

This is an uncharacterized protein from Fusobacterium nucleatum subsp. nucleatum (strain ATCC 25586 / DSM 15643 / BCRC 10681 / CIP 101130 / JCM 8532 / KCTC 2640 / LMG 13131 / VPI 4355).